The sequence spans 33 residues: Photosystem II reaction center protein Psb30 (33 aa).

The chain crosses the membrane as a helical span at residues valine 5 to phenylalanine 25.

The protein belongs to the Psb30/Ycf12 family. PSII is composed of 1 copy each of membrane proteins PsbA, PsbB, PsbC, PsbD, PsbE, PsbF, PsbH, PsbI, PsbJ, PsbK, PsbL, PsbM, PsbT, PsbX, PsbY, PsbZ, Psb30/Ycf12, peripheral proteins of the oxygen-evolving complex and a large number of cofactors. It forms dimeric complexes.

The protein resides in the plastid. It localises to the chloroplast thylakoid membrane. Functionally, a core subunit of photosystem II (PSII), probably helps stabilize the reaction center. The chain is Photosystem II reaction center protein Psb30 from Welwitschia mirabilis (Tree tumbo).